Reading from the N-terminus, the 357-residue chain is DNA primase small subunit PriS (357 aa).

Catalysis depends on residues Asp105, Asp107, and Asp259.

Belongs to the eukaryotic-type primase small subunit family. As to quaternary structure, heterodimer of a small subunit (PriS) and a large subunit (PriL). Mg(2+) serves as cofactor. The cofactor is Mn(2+).

Its function is as follows. Catalytic subunit of DNA primase, an RNA polymerase that catalyzes the synthesis of short RNA molecules used as primers for DNA polymerase during DNA replication. The small subunit contains the primase catalytic core and has DNA synthesis activity on its own. Binding to the large subunit stabilizes and modulates the activity, increasing the rate of DNA synthesis while decreasing the length of the DNA fragments, and conferring RNA synthesis capability. The DNA polymerase activity may enable DNA primase to also catalyze primer extension after primer synthesis. May also play a role in DNA repair. This chain is DNA primase small subunit PriS, found in Methanococcus maripaludis (strain C5 / ATCC BAA-1333).